We begin with the raw amino-acid sequence, 536 residues long: Protein GvpD1 (536 aa).

39–46 (GAPGTGKT) lines the ATP pocket. A disordered region spans residues 352 to 413 (GPSDSADRYD…SDQPHPIDED (62 aa)). The segment covering 363–372 (PDSTESFSEM) has biased composition (polar residues). Residues 373-385 (ATTTPPDDAPTAT) are compositionally biased toward low complexity. The segment covering 386–396 (HETDGADDGSR) has biased composition (basic and acidic residues).

The protein belongs to the gas vesicle GvpD family. Interacts with GvpE.

It is found in the cytoplasm. In terms of biological role, causes a decrease in the amount of GvpE protein. The 5'-region of its promoter or mRNA has a repressive function on downstream genes. Gas vesicles are hollow, gas filled proteinaceous nanostructures found in several microbial planktonic microorganisms. They allow positioning of halobacteria at the optimal depth for growth in the poorly aerated, shallow brine pools of their habitat. Functionally, expression of a 9.5 kb p-vac DNA fragment containing 2 divergently transcribed regions (gvpD-gvpE-gvpF-gvpG-gvpH-gvpI-gvpJ-gvpK-gvpL-gvpM and gvpA-gvpC-gvpN-gvpO) allows H.volcanii to produce gas vesicles. A similar region restores gas vesicle production in H.halobium without the p-vac locus, but it still has the c-vac locus. The protein is Protein GvpD1 (gvpD11) of Halobacterium salinarum (strain ATCC 700922 / JCM 11081 / NRC-1) (Halobacterium halobium).